The chain runs to 349 residues: Myocyte-specific enhancer factor 2B (349 aa).

The region spanning 3–57 is the MADS-box domain; that stretch reads RKKIQISRILDQRNRQVTFTKRKFGLMKKAYELSVLCDCDIALIIFNSAQRLFQY. A DNA-binding region (mef2-type) is located at residues 58 to 86; it reads ASSDMDRVLLKYTEYSEPHESRTNADILQ. Disordered stretches follow at residues 237 to 317 and 330 to 349; these read GSFA…DFPR and AEPL…SWPR.

Belongs to the MEF2 family. In terms of assembly, heterodimer. Interacts with HDAC9. Interacts with HDAC7. In terms of tissue distribution, highest expression found in embryonic heart and skeletal muscle. Low levels found in adult spleen, lung and testis while no expression is found in adult heart, brain or skeletal muscle.

Its subcellular location is the nucleus. Its function is as follows. Transcriptional activator which binds specifically to the MEF2 element, 5'-YTA[AT](4)TAR-3', found in numerous muscle-specific genes. Activates transcription via this element. May be involved in muscle-specific and/or growth factor-related transcription. The protein is Myocyte-specific enhancer factor 2B (Mef2b) of Mus musculus (Mouse).